The chain runs to 542 residues: MAKDIKFSEEARRSMLRGVDTLANAVKVTLGPKGRNVVLEKKFGSPLITNDGVTIAKEIELEDAFENMGAKLVAEVASKTNDVAGDGTTTATVLAQAMIREGLKNVTAGANPMGLRKGIEKAVATAVEELKTISKPIEGKSSIAQVAAISAADEEVGQLIAEAMERVGNDGVITLEESKGFTTELDVVEGMQFDRGYASPYMITDSDKMEAVLDNPYILITDKKISNIQEILPVLEQVVQQGKPLLIIAEDVEGEALATLVVNKLRGTFNVVAVKAPGFGDRRKAMLEDIAILTDGEVITEELGRDLKSATIESLGRAGKVVVTKENTTIVEGVGSTEQIEARIGQIRAQLEETTSEFDREKLQERLAKLAGGVAVIKVGAATETELKERKLRIEDALNSTRAAVEEGIVAGGGTSLMNVYAKVASIAAEGDEATGINIVLRALEEPVRQIAINAGLEGSVVVERLKGEKVGVGFNAATGEWVNMLESGIVDPAKVTRSALQNAASVAAMFLTTEAVVADKPEENKPAMPDMGAMGGMPGMM.

ATP-binding positions include 29-32 (TLGP), 86-90 (DGTTT), Gly413, 476-478 (NAA), and Asp492.

Belongs to the chaperonin (HSP60) family. As to quaternary structure, forms a cylinder of 14 subunits composed of two heptameric rings stacked back-to-back. Interacts with the co-chaperonin GroES.

It localises to the cytoplasm. The catalysed reaction is ATP + H2O + a folded polypeptide = ADP + phosphate + an unfolded polypeptide.. Functionally, together with its co-chaperonin GroES, plays an essential role in assisting protein folding. The GroEL-GroES system forms a nano-cage that allows encapsulation of the non-native substrate proteins and provides a physical environment optimized to promote and accelerate protein folding. The sequence is that of Chaperonin GroEL from Bacillus cytotoxicus (strain DSM 22905 / CIP 110041 / 391-98 / NVH 391-98).